A 256-amino-acid chain; its full sequence is Ribosomal RNA small subunit methyltransferase J (256 aa).

S-adenosyl-L-methionine-binding positions include Arg101–Asp102, Glu117–Arg118, Ser153–Ser154, and Asp176.

This sequence belongs to the methyltransferase superfamily. RsmJ family.

The protein localises to the cytoplasm. It catalyses the reaction guanosine(1516) in 16S rRNA + S-adenosyl-L-methionine = N(2)-methylguanosine(1516) in 16S rRNA + S-adenosyl-L-homocysteine + H(+). Its function is as follows. Specifically methylates the guanosine in position 1516 of 16S rRNA. This is Ribosomal RNA small subunit methyltransferase J from Photobacterium profundum (strain SS9).